The primary structure comprises 181 residues: Inner membrane-spanning protein YciB (181 aa).

5 helical membrane passes run 10–30, 50–70, 80–100, 118–138, and 148–168; these read LVIF…GALI, MHLI…VFHD, IIYS…KSIL, VTWY…YVAF, and FKVF…VFYL.

This sequence belongs to the YciB family.

It is found in the cell inner membrane. Plays a role in cell envelope biogenesis, maintenance of cell envelope integrity and membrane homeostasis. This chain is Inner membrane-spanning protein YciB, found in Shewanella baltica (strain OS223).